Reading from the N-terminus, the 578-residue chain is Acyl-CoA ligase AFT1-1 (578 aa).

ATP contacts are provided by residues serine 210 to lysine 218, glutamine 350 to threonine 355, aspartate 438, arginine 457, and lysine 554. Residues glycine 281 to glutamine 350 form an SBD1 region. Positions cysteine 351–tyrosine 413 are SBD2. The short motif at serine 576–isoleucine 578 is the Peroxisomal targeting signal type 1 element.

This sequence belongs to the ATP-dependent AMP-binding enzyme family.

The protein localises to the peroxisome. Its pathway is mycotoxin biosynthesis. Acyl-CoA ligase; part of the gene clusters that mediate the biosynthesis of the host-selective toxins (HSTs) AF-toxins responsible for Alternaria black spot of strawberry disease by the strawberry pathotype. AF-toxin I and III are valine derivatives of 2,3-dyhydroxy-isovaleric acid and 2-hydroxy-isovaleric acid respectively, while AF II is an isoleucine derivative of 2-hydroxy-valeric acid. These derivatives are bound to a 9,10-epoxy-8-hydroxy-9-methyl-decatrienoic acid (EDA) moiety. On cellular level, AF-toxins affect plasma membrane of susceptible cells and cause a sudden increase in loss of K(+) after a few minutes of toxin treatment. The aldo-keto reductase AFTS1 catalyzes the conversion of 2-keto-isovaleric acid (2-KIV) to 2-hydroxy-isovaleric acid (2-HIV) by reduction of its ketone to an alcohol. The acyl-CoA ligase AFT1, the hydrolase AFT2 and the enoyl-CoA hydratases AFT3 and AFT6, but also the polyketide synthase AFT9, the acyl-CoA dehydrogenase AFT10, the cytochrome P450 monooxygenase AFT11 and the oxidoreductase AFT12 are all involved in the biosynthesis of the AK-, AF- and ACT-toxin common EDA structural moiety. The exact role of each enzyme, and of additional enzymes identified within the AF-toxin clusters have still to be determined. In Alternaria alternata (Alternaria rot fungus), this protein is Acyl-CoA ligase AFT1-1.